Reading from the N-terminus, the 263-residue chain is Putative protein JayE (263 aa).

Belongs to the Mu gp47/PBSX XkdT family.

In Escherichia coli (strain K12), this protein is Putative protein JayE (jayE).